Here is a 506-residue protein sequence, read N- to C-terminus: Maturase K (506 aa).

This sequence belongs to the intron maturase 2 family. MatK subfamily.

The protein localises to the plastid. It is found in the chloroplast. Functionally, usually encoded in the trnK tRNA gene intron. Probably assists in splicing its own and other chloroplast group II introns. The polypeptide is Maturase K (Jurinea cyanoides).